A 59-amino-acid chain; its full sequence is Large ribosomal subunit protein eL37 (59 aa).

Cysteine 20, cysteine 23, cysteine 35, and cysteine 38 together coordinate Zn(2+). The C4-type zinc finger occupies 20–38; sequence CRRCGRHSFHRRKGYCAAC.

This sequence belongs to the eukaryotic ribosomal protein eL37 family. Zn(2+) serves as cofactor.

Its function is as follows. Binds to the 23S rRNA. In Archaeoglobus fulgidus (strain ATCC 49558 / DSM 4304 / JCM 9628 / NBRC 100126 / VC-16), this protein is Large ribosomal subunit protein eL37 (rpl37e).